Reading from the N-terminus, the 843-residue chain is Pullulanase (843 aa).

Positions 1 to 19 (MKTKLWLLLVLLLSALIFS) are cleaved as a signal peptide. Catalysis depends on Asp-535, which acts as the Nucleophile. Glu-564 functions as the Proton donor in the catalytic mechanism.

Belongs to the glycosyl hydrolase 13 family.

It catalyses the reaction Hydrolysis of (1-&gt;6)-alpha-D-glucosidic linkages in pullulan, amylopectin and glycogen, and in the alpha- and beta-limit dextrins of amylopectin and glycogen.. In Thermotoga maritima (strain ATCC 43589 / DSM 3109 / JCM 10099 / NBRC 100826 / MSB8), this protein is Pullulanase (pulA).